A 348-amino-acid chain; its full sequence is Protein RecA (348 aa).

67–74 (GPESSGKT) is an ATP binding site.

Belongs to the RecA family.

It localises to the cytoplasm. Functionally, can catalyze the hydrolysis of ATP in the presence of single-stranded DNA, the ATP-dependent uptake of single-stranded DNA by duplex DNA, and the ATP-dependent hybridization of homologous single-stranded DNAs. It interacts with LexA causing its activation and leading to its autocatalytic cleavage. The sequence is that of Protein RecA from Clostridioides difficile (strain 630) (Peptoclostridium difficile).